The sequence spans 259 residues: Kynurenine formamidase (259 aa).

Positions 34–38 (HGGAW) match the HGGXW motif. Catalysis depends on serine 103, which acts as the Nucleophile. Residues aspartate 196 and histidine 228 contribute to the active site.

The protein belongs to the kynurenine formamidase family. As to quaternary structure, homodimer.

The enzyme catalyses N-formyl-L-kynurenine + H2O = L-kynurenine + formate + H(+). Its pathway is amino-acid degradation; L-tryptophan degradation via kynurenine pathway; L-kynurenine from L-tryptophan: step 2/2. Functionally, catalyzes the hydrolysis of N-formyl-L-kynurenine to L-kynurenine, the second step in the kynurenine pathway of tryptophan degradation. Kynurenine may be further oxidized to nicotinic acid, NAD(H) and NADP(H). Required for elimination of toxic metabolites. The protein is Kynurenine formamidase of Meyerozyma guilliermondii (strain ATCC 6260 / CBS 566 / DSM 6381 / JCM 1539 / NBRC 10279 / NRRL Y-324) (Yeast).